We begin with the raw amino-acid sequence, 414 residues long: Phosphopentomutase (414 aa).

Mn(2+) is bound by residues Asp-10, Asp-309, His-314, Asp-350, His-351, and His-362.

The protein belongs to the phosphopentomutase family. It depends on Mn(2+) as a cofactor.

It is found in the cytoplasm. The enzyme catalyses 2-deoxy-alpha-D-ribose 1-phosphate = 2-deoxy-D-ribose 5-phosphate. It carries out the reaction alpha-D-ribose 1-phosphate = D-ribose 5-phosphate. Its pathway is carbohydrate degradation; 2-deoxy-D-ribose 1-phosphate degradation; D-glyceraldehyde 3-phosphate and acetaldehyde from 2-deoxy-alpha-D-ribose 1-phosphate: step 1/2. Functionally, isomerase that catalyzes the conversion of deoxy-ribose 1-phosphate (dRib-1-P) and ribose 1-phosphate (Rib-1-P) to deoxy-ribose 5-phosphate (dRib-5-P) and ribose 5-phosphate (Rib-5-P), respectively. This Hahella chejuensis (strain KCTC 2396) protein is Phosphopentomutase.